The chain runs to 393 residues: METFLFTSESVNEGHPDKLCDQISDAVLDACLEQDPDSKVACETCTKTNMVMVFGEITTKATVDYEKIVRDTCRSIGFVSDDVGLDADNCKVLVNIEQQSPDIAQGVHGHLTKRPEEIGAGDQGHMFGYATDETPEFMPLSHVLATKLGARLTEVRKNGTCPWLRPDGKTQVTVEYYNENGAMVPVRVHTVVISTQHDETVTNDQIAADLKEHVIKPVIPEKYLDERTIFHLNPSGRFVIGGPHGDAGLTGRKIIIDTYGGWGAHGGGAFSGKDPTKVDRSGAYIVRQAAKSIVANGLARRCIVQVSYAIGVPEPLSVFVDTYGTGKIPDKEILKIVKENFDFRPGMIAINLDLKRGGSGRFLKTAAYGHFGRDDPDFTWEVVKPLKWEKAAN.

E9 serves as a coordination point for Mg(2+). H15 provides a ligand contact to ATP. K(+) is bound at residue E43. L-methionine is bound by residues E56 and Q99. ATP is bound by residues 167-169 (DGK), 235-238 (SGRF), D246, 252-253 (RK), A269, K273, and K277. D246 is a binding site for L-methionine. K277 contributes to the L-methionine binding site.

This sequence belongs to the AdoMet synthase family. In terms of assembly, homotetramer. Mn(2+) is required as a cofactor. The cofactor is Mg(2+). Co(2+) serves as cofactor. Requires K(+) as cofactor. It depends on NH4(+) as a cofactor. As to expression, mostly expressed in roots, and, to a lower extent, in hypocotyls and cotyledons.

The protein localises to the cytoplasm. It catalyses the reaction L-methionine + ATP + H2O = S-adenosyl-L-methionine + phosphate + diphosphate. It participates in amino-acid biosynthesis; S-adenosyl-L-methionine biosynthesis; S-adenosyl-L-methionine from L-methionine: step 1/1. Inhibited by products of SAMS reaction (SAM, Pi, PPi), substrate analogs (cycloleucine and ethionine), and alternative nucleotides (GTP, CTP and ADP). Strongly repressed by PPPi. In terms of biological role, catalyzes the formation of S-adenosylmethionine from methionine and ATP. The reaction comprises two steps that are both catalyzed by the same enzyme: formation of S-adenosylmethionine (AdoMet) and triphosphate, and subsequent hydrolysis of the triphosphate. The sequence is that of S-adenosylmethionine synthase 1 (SAMS1) from Catharanthus roseus (Madagascar periwinkle).